A 589-amino-acid polypeptide reads, in one-letter code: Probable translation initiation factor IF-2 (589 aa).

Positions 4–225 constitute a tr-type G domain; sequence VRSPFVVVMG…AGVSQRFIPR (222 aa). A G1 region spans residues 13–20; that stretch reads GHVDVGKT. 13 to 20 is a binding site for GTP; the sequence is GHVDVGKT. The tract at residues 38 to 42 is G2; the sequence is MITQH. The tract at residues 79–82 is G3; the sequence is DTPG. GTP contacts are provided by residues 79 to 83 and 133 to 136; these read DTPGH and NKLD. The tract at residues 133–136 is G4; the sequence is NKLD. The tract at residues 201-203 is G5; it reads SAV.

The protein belongs to the TRAFAC class translation factor GTPase superfamily. Classic translation factor GTPase family. IF-2 subfamily.

Function in general translation initiation by promoting the binding of the formylmethionine-tRNA to ribosomes. Seems to function along with eIF-2. The sequence is that of Probable translation initiation factor IF-2 from Pyrobaculum aerophilum (strain ATCC 51768 / DSM 7523 / JCM 9630 / CIP 104966 / NBRC 100827 / IM2).